Consider the following 400-residue polypeptide: Beta-ketoadipyl-CoA thiolase (400 aa).

The active-site Acyl-thioester intermediate is Cys90. Residues His356 and Cys386 each act as proton acceptor in the active site.

The protein belongs to the thiolase-like superfamily. Thiolase family.

The catalysed reaction is succinyl-CoA + acetyl-CoA = 3-oxoadipyl-CoA + CoA. It participates in aromatic compound metabolism; beta-ketoadipate pathway; acetyl-CoA and succinyl-CoA from 3-oxoadipate: step 2/2. In terms of biological role, catalyzes thiolytic cleavage of beta-ketoadipyl-CoA to succinyl-CoA and acetyl-CoA. The polypeptide is Beta-ketoadipyl-CoA thiolase (pcaF) (Pseudomonas putida (Arthrobacter siderocapsulatus)).